The primary structure comprises 196 residues: Imidazoleglycerol-phosphate dehydratase (196 aa).

Belongs to the imidazoleglycerol-phosphate dehydratase family.

It localises to the cytoplasm. The enzyme catalyses D-erythro-1-(imidazol-4-yl)glycerol 3-phosphate = 3-(imidazol-4-yl)-2-oxopropyl phosphate + H2O. It participates in amino-acid biosynthesis; L-histidine biosynthesis; L-histidine from 5-phospho-alpha-D-ribose 1-diphosphate: step 6/9. The protein is Imidazoleglycerol-phosphate dehydratase of Acidiphilium cryptum (strain JF-5).